Reading from the N-terminus, the 322-residue chain is Aldo-keto reductase family 1 member C23 (322 aa).

An NADP(+)-binding site is contributed by 20 to 24; sequence GFGTY. Substrate is bound at residue Lys31. Position 50 (Asp50) interacts with NADP(+). Tyr55 functions as the Proton donor in the catalytic mechanism. Position 117 (His117) interacts with substrate. NADP(+) contacts are provided by residues 166-167, Gln190, 216-221, and 269-279; these read SN, YSALGS, and KSYNEKRIKEN.

This sequence belongs to the aldo/keto reductase family. As to quaternary structure, monomer. Detected in follicle granulosa cells (at protein level). Detected in heart, lung, liver, kidney, stomach, uterus, testis, skeletal muscle and granulosa cells of the follicle wall.

Its subcellular location is the cytoplasm. In terms of biological role, NADP-dependent oxidoreductase that has 20-alpha-hydroxysteroid dehydrogenase activity. This Equus caballus (Horse) protein is Aldo-keto reductase family 1 member C23 (AKR1C23).